We begin with the raw amino-acid sequence, 249 residues long: AA9 family lytic polysaccharide monooxygenase A (249 aa).

The first 19 residues, 1–19, serve as a signal peptide directing secretion; it reads MRGPLCFTLIAIAVTSVVA. Positions 20 and 97 each coordinate Cu(2+). The cysteines at positions 60 and 183 are disulfide-linked. His163 provides a ligand contact to O2. Tyr180 contributes to the Cu(2+) binding site.

Belongs to the polysaccharide monooxygenase AA9 family. It depends on Cu(2+) as a cofactor.

It localises to the secreted. It catalyses the reaction [(1-&gt;4)-beta-D-glucosyl]n+m + reduced acceptor + O2 = 4-dehydro-beta-D-glucosyl-[(1-&gt;4)-beta-D-glucosyl]n-1 + [(1-&gt;4)-beta-D-glucosyl]m + acceptor + H2O.. In terms of biological role, lytic polysaccharide monooxygenase (LPMO) that depolymerizes crystalline and amorphous polysaccharides via the oxidation of scissile alpha- or beta-(1-4)-glycosidic bonds, yielding C4 oxidation products. Catalysis by LPMOs requires the reduction of the active-site copper from Cu(II) to Cu(I) by a reducing agent and H(2)O(2) or O(2) as a cosubstrate. Active on cellulose and cello-oligosaccharides, as well as plant cell wall-derived hemicellulosic polysaccharides. Also active on cello-oligosaccharides such as cellohexaose, cellopentaose or cellotetraose. The polypeptide is AA9 family lytic polysaccharide monooxygenase A (Armillaria gallica (Bulbous honey fungus)).